Reading from the N-terminus, the 255-residue chain is 3-dehydroquinate dehydratase (255 aa).

Residues 46–48 and Arg82 contribute to the 3-dehydroquinate site; that span reads EWR. The active-site Proton donor/acceptor is His143. Lys170 acts as the Schiff-base intermediate with substrate in catalysis. 3 residues coordinate 3-dehydroquinate: Arg213, Ser232, and Gln236.

This sequence belongs to the type-I 3-dehydroquinase family. Homodimer.

The enzyme catalyses 3-dehydroquinate = 3-dehydroshikimate + H2O. It functions in the pathway metabolic intermediate biosynthesis; chorismate biosynthesis; chorismate from D-erythrose 4-phosphate and phosphoenolpyruvate: step 3/7. Its function is as follows. Involved in the third step of the chorismate pathway, which leads to the biosynthesis of aromatic amino acids. Catalyzes the cis-dehydration of 3-dehydroquinate (DHQ) and introduces the first double bond of the aromatic ring to yield 3-dehydroshikimate. This is 3-dehydroquinate dehydratase from Bacillus subtilis (strain 168).